Here is a 478-residue protein sequence, read N- to C-terminus: Aspartyl/glutamyl-tRNA(Asn/Gln) amidotransferase subunit B (478 aa).

It belongs to the GatB/GatE family. GatB subfamily. In terms of assembly, heterotrimer of A, B and C subunits.

It catalyses the reaction L-glutamyl-tRNA(Gln) + L-glutamine + ATP + H2O = L-glutaminyl-tRNA(Gln) + L-glutamate + ADP + phosphate + H(+). It carries out the reaction L-aspartyl-tRNA(Asn) + L-glutamine + ATP + H2O = L-asparaginyl-tRNA(Asn) + L-glutamate + ADP + phosphate + 2 H(+). Its function is as follows. Allows the formation of correctly charged Asn-tRNA(Asn) or Gln-tRNA(Gln) through the transamidation of misacylated Asp-tRNA(Asn) or Glu-tRNA(Gln) in organisms which lack either or both of asparaginyl-tRNA or glutaminyl-tRNA synthetases. The reaction takes place in the presence of glutamine and ATP through an activated phospho-Asp-tRNA(Asn) or phospho-Glu-tRNA(Gln). The chain is Aspartyl/glutamyl-tRNA(Asn/Gln) amidotransferase subunit B from Dichelobacter nodosus (strain VCS1703A).